Here is a 567-residue protein sequence, read N- to C-terminus: 2-succinyl-5-enolpyruvyl-6-hydroxy-3-cyclohexene-1-carboxylate synthase (567 aa).

The protein belongs to the TPP enzyme family. MenD subfamily. Homodimer. It depends on Mg(2+) as a cofactor. The cofactor is Mn(2+). Requires thiamine diphosphate as cofactor.

The enzyme catalyses isochorismate + 2-oxoglutarate + H(+) = 5-enolpyruvoyl-6-hydroxy-2-succinyl-cyclohex-3-ene-1-carboxylate + CO2. Its pathway is quinol/quinone metabolism; 1,4-dihydroxy-2-naphthoate biosynthesis; 1,4-dihydroxy-2-naphthoate from chorismate: step 2/7. The protein operates within quinol/quinone metabolism; menaquinone biosynthesis. In terms of biological role, catalyzes the thiamine diphosphate-dependent decarboxylation of 2-oxoglutarate and the subsequent addition of the resulting succinic semialdehyde-thiamine pyrophosphate anion to isochorismate to yield 2-succinyl-5-enolpyruvyl-6-hydroxy-3-cyclohexene-1-carboxylate (SEPHCHC). The protein is 2-succinyl-5-enolpyruvyl-6-hydroxy-3-cyclohexene-1-carboxylate synthase of Yersinia pseudotuberculosis serotype I (strain IP32953).